A 533-amino-acid polypeptide reads, in one-letter code: Na(+)/H(+) antiporter NhaB (533 aa).

10 helical membrane passes run 28 to 50, 67 to 87, 96 to 116, 131 to 165, 254 to 274, 316 to 336, 364 to 384, 396 to 416, 454 to 474, and 481 to 501; these read FLII…VLVL, PGGL…SQVL, VLLL…LLLF, VSLM…FYSI, VPVL…GIFG, LIAG…SVII, LAVF…APVI, LVIF…VFVG, ATPN…APLI, and MVWM…MAIQ.

This sequence belongs to the NhaB Na(+)/H(+) (TC 2.A.34) antiporter family.

It localises to the cell inner membrane. It carries out the reaction 2 Na(+)(in) + 3 H(+)(out) = 2 Na(+)(out) + 3 H(+)(in). Na(+)/H(+) antiporter that extrudes sodium in exchange for external protons. This chain is Na(+)/H(+) antiporter NhaB, found in Shewanella baltica (strain OS195).